The sequence spans 263 residues: Acyl-[acyl-carrier-protein]--UDP-N-acetylglucosamine O-acyltransferase (263 aa).

Belongs to the transferase hexapeptide repeat family. LpxA subfamily. Homotrimer.

It is found in the cytoplasm. It catalyses the reaction a (3R)-hydroxyacyl-[ACP] + UDP-N-acetyl-alpha-D-glucosamine = a UDP-3-O-[(3R)-3-hydroxyacyl]-N-acetyl-alpha-D-glucosamine + holo-[ACP]. It functions in the pathway glycolipid biosynthesis; lipid IV(A) biosynthesis; lipid IV(A) from (3R)-3-hydroxytetradecanoyl-[acyl-carrier-protein] and UDP-N-acetyl-alpha-D-glucosamine: step 1/6. Involved in the biosynthesis of lipid A, a phosphorylated glycolipid that anchors the lipopolysaccharide to the outer membrane of the cell. The protein is Acyl-[acyl-carrier-protein]--UDP-N-acetylglucosamine O-acyltransferase of Campylobacter jejuni subsp. jejuni serotype O:2 (strain ATCC 700819 / NCTC 11168).